A 442-amino-acid chain; its full sequence is Histidinol dehydrogenase (442 aa).

3 residues coordinate NAD(+): Y136, Q197, and N220. Residues S243, Q265, and H268 each contribute to the substrate site. Residues Q265 and H268 each contribute to the Zn(2+) site. Catalysis depends on proton acceptor residues E333 and H334. Substrate contacts are provided by H334, D367, E421, and H426. Zn(2+) is bound at residue D367. H426 contacts Zn(2+).

It belongs to the histidinol dehydrogenase family. Zn(2+) is required as a cofactor.

The enzyme catalyses L-histidinol + 2 NAD(+) + H2O = L-histidine + 2 NADH + 3 H(+). It participates in amino-acid biosynthesis; L-histidine biosynthesis; L-histidine from 5-phospho-alpha-D-ribose 1-diphosphate: step 9/9. Catalyzes the sequential NAD-dependent oxidations of L-histidinol to L-histidinaldehyde and then to L-histidine. In Pseudomonas fluorescens (strain ATCC BAA-477 / NRRL B-23932 / Pf-5), this protein is Histidinol dehydrogenase.